The sequence spans 241 residues: Geranylgeranylglyceryl phosphate synthase (241 aa).

Positions 19 and 46 each coordinate Mg(2+). Residues 167 to 173, 198 to 199, and 220 to 221 each bind sn-glycerol 1-phosphate; these read YLEAGSG, GG, and GT.

It belongs to the GGGP/HepGP synthase family. Group II subfamily. Mg(2+) serves as cofactor.

It is found in the cytoplasm. The catalysed reaction is sn-glycerol 1-phosphate + (2E,6E,10E)-geranylgeranyl diphosphate = sn-3-O-(geranylgeranyl)glycerol 1-phosphate + diphosphate. It functions in the pathway membrane lipid metabolism; glycerophospholipid metabolism. Its function is as follows. Prenyltransferase that catalyzes the transfer of the geranylgeranyl moiety of geranylgeranyl diphosphate (GGPP) to the C3 hydroxyl of sn-glycerol-1-phosphate (G1P). This reaction is the first ether-bond-formation step in the biosynthesis of archaeal membrane lipids. This Pyrobaculum calidifontis (strain DSM 21063 / JCM 11548 / VA1) protein is Geranylgeranylglyceryl phosphate synthase.